The sequence spans 514 residues: tRNA-2-methylthio-N(6)-dimethylallyladenosine synthase (514 aa).

The 119-residue stretch at Arg68–Leu186 folds into the MTTase N-terminal domain. [4Fe-4S] cluster-binding residues include Cys77, Cys113, Cys147, Cys223, Cys227, and Cys230. The region spanning Arg209 to Lys439 is the Radical SAM core domain. A TRAM domain is found at Asn442–Glu505.

This sequence belongs to the methylthiotransferase family. MiaB subfamily. Monomer. [4Fe-4S] cluster is required as a cofactor.

It localises to the cytoplasm. It catalyses the reaction N(6)-dimethylallyladenosine(37) in tRNA + (sulfur carrier)-SH + AH2 + 2 S-adenosyl-L-methionine = 2-methylsulfanyl-N(6)-dimethylallyladenosine(37) in tRNA + (sulfur carrier)-H + 5'-deoxyadenosine + L-methionine + A + S-adenosyl-L-homocysteine + 2 H(+). Functionally, catalyzes the methylthiolation of N6-(dimethylallyl)adenosine (i(6)A), leading to the formation of 2-methylthio-N6-(dimethylallyl)adenosine (ms(2)i(6)A) at position 37 in tRNAs that read codons beginning with uridine. The sequence is that of tRNA-2-methylthio-N(6)-dimethylallyladenosine synthase from Staphylococcus haemolyticus (strain JCSC1435).